A 219-amino-acid chain; its full sequence is Urease accessory protein UreG (219 aa).

Residues 1–20 (MSALHSIPHRSKKLPPLRVG) form a disordered region. 23-30 (GPVGSGKT) is a binding site for GTP.

The protein belongs to the SIMIBI class G3E GTPase family. UreG subfamily. In terms of assembly, homodimer. UreD, UreF and UreG form a complex that acts as a GTP-hydrolysis-dependent molecular chaperone, activating the urease apoprotein by helping to assemble the nickel containing metallocenter of UreC. The UreE protein probably delivers the nickel.

It localises to the cytoplasm. Its function is as follows. Facilitates the functional incorporation of the urease nickel metallocenter. This process requires GTP hydrolysis, probably effectuated by UreG. In Methylibium petroleiphilum (strain ATCC BAA-1232 / LMG 22953 / PM1), this protein is Urease accessory protein UreG.